The chain runs to 559 residues: T-complex protein 1 subunit gamma (559 aa).

A disulfide bridge links C368 with C374. The disordered stretch occupies residues 531–559 (KDKRGGAGQRGGDRGQGDQEETFGDQRDG).

It belongs to the TCP-1 chaperonin family. In terms of assembly, heterooligomeric complex of about 850 to 900 kDa that forms two stacked rings, 12 to 16 nm in diameter.

It is found in the cytoplasm. Molecular chaperone; assists the folding of proteins upon ATP hydrolysis. Known to play a role, in vitro, in the folding of actin and tubulin. This is T-complex protein 1 subunit gamma from Oxytricha granulifera (Ciliate).